The primary structure comprises 524 residues: 2-isopropylmalate synthase (524 aa).

Positions 15–277 constitute a Pyruvate carboxyltransferase domain; the sequence is VVIFDTTMRD…ETKIDTTHIT (263 aa). Mn(2+) contacts are provided by Asp24, His212, His214, and Asn248. The segment at 401–524 is regulatory domain; sequence RVQRLRVVAG…RPEAAIASGF (124 aa).

The protein belongs to the alpha-IPM synthase/homocitrate synthase family. LeuA type 1 subfamily. As to quaternary structure, homodimer. The cofactor is Mn(2+).

It is found in the cytoplasm. It carries out the reaction 3-methyl-2-oxobutanoate + acetyl-CoA + H2O = (2S)-2-isopropylmalate + CoA + H(+). It participates in amino-acid biosynthesis; L-leucine biosynthesis; L-leucine from 3-methyl-2-oxobutanoate: step 1/4. Functionally, catalyzes the condensation of the acetyl group of acetyl-CoA with 3-methyl-2-oxobutanoate (2-ketoisovalerate) to form 3-carboxy-3-hydroxy-4-methylpentanoate (2-isopropylmalate). This chain is 2-isopropylmalate synthase, found in Caulobacter sp. (strain K31).